We begin with the raw amino-acid sequence, 517 residues long: 2,4,6-trichlorophenol monooxygenase (517 aa).

Belongs to the FADH(2)-utilizing monooxygenase family. As to quaternary structure, homotetramer in solution.

It catalyses the reaction 2,4,6-trichlorophenol + FADH2 + O2 = 2-chloro-6-hydroxy-1,4-benzoquinone + FAD + 2 chloride + 3 H(+). The catalysed reaction is 2,4,6-trichlorophenol + FADH2 + O2 = 2,6-dichlorobenzoquinone + FAD + chloride + H2O + H(+). It carries out the reaction 2,6-dichlorobenzoquinone + H2O = 2-chloro-6-hydroxy-1,4-benzoquinone + chloride + 2 H(+). The protein operates within aromatic compound metabolism. It participates in xenobiotic degradation. Its function is as follows. Involved in the degradation of 2,4,6-trichlorophenol (2,4,6-TCP). Catalyzes the conversion of 2,4,6-TCP to 6-chlorohydroxyquinol (6-CHQ). The monooxygenase oxidizes 2,4,6-TCP to 2,6-dichloroquinone (2,6-DCBQ), which remains with the enzyme and is hydrolyzed to 2-chlorohydroxyquinone. 2-chlorohydroxyquinone is chemically reduced by ascorbate and NADH to 6-chlorohydroxyquinol (6-CHQ). This is 2,4,6-trichlorophenol monooxygenase from Cupriavidus pinatubonensis (strain JMP 134 / LMG 1197) (Cupriavidus necator (strain JMP 134)).